A 257-amino-acid chain; its full sequence is 3-deoxy-manno-octulosonate cytidylyltransferase (257 aa).

The protein belongs to the KdsB family.

It localises to the cytoplasm. The catalysed reaction is 3-deoxy-alpha-D-manno-oct-2-ulosonate + CTP = CMP-3-deoxy-beta-D-manno-octulosonate + diphosphate. It functions in the pathway nucleotide-sugar biosynthesis; CMP-3-deoxy-D-manno-octulosonate biosynthesis; CMP-3-deoxy-D-manno-octulosonate from 3-deoxy-D-manno-octulosonate and CTP: step 1/1. It participates in bacterial outer membrane biogenesis; lipopolysaccharide biosynthesis. Functionally, activates KDO (a required 8-carbon sugar) for incorporation into bacterial lipopolysaccharide in Gram-negative bacteria. The chain is 3-deoxy-manno-octulosonate cytidylyltransferase from Xylella fastidiosa (strain M12).